Here is a 606-residue protein sequence, read N- to C-terminus: Threonine dehydratase 1 biosynthetic, chloroplastic (606 aa).

Lys154 is modified (N6-(pyridoxal phosphate)lysine). ACT-like domains follow at residues 432–504 (AVLA…NLTD) and 526–597 (LLCR…MESL).

The protein belongs to the serine/threonine dehydratase family. The cofactor is pyridoxal 5'-phosphate. In terms of tissue distribution, expressed constitutively in all tissues examined including root, stem, petiole, leaf, immature flower bud, unopened flower and opened flower with the highest expression in opened flower and lowest in leaf.

Its subcellular location is the plastid. It localises to the chloroplast. The enzyme catalyses L-threonine = 2-oxobutanoate + NH4(+). It functions in the pathway amino-acid biosynthesis; L-isoleucine biosynthesis; 2-oxobutanoate from L-threonine: step 1/1. With respect to regulation, strongly inhibited by 1 mM isoleucine. In terms of biological role, has a housekeeping role in isoleucine biosynthesis. The sequence is that of Threonine dehydratase 1 biosynthetic, chloroplastic from Solanum lycopersicum (Tomato).